The chain runs to 480 residues: RNA-splicing ligase RtcB homolog (480 aa).

Mn(2+)-binding residues include Asp-93, Cys-96, His-202, His-234, and His-328. A GMP-binding site is contributed by 201–205; that stretch reads NHYTE. Residues 328–329, 377–380, Ser-384, 403–406, and Lys-479 contribute to the GMP site; these read HN, GGTM, and HGAG. The GMP-histidine intermediate role is filled by His-403.

This sequence belongs to the RtcB family. As to quaternary structure, catalytic component of the tRNA-splicing ligase complex. Requires Mn(2+) as cofactor.

It catalyses the reaction a 3'-end 3'-phospho-ribonucleotide-RNA + a 5'-end dephospho-ribonucleoside-RNA + GTP = a ribonucleotidyl-ribonucleotide-RNA + GMP + diphosphate. It carries out the reaction a 3'-end 2',3'-cyclophospho-ribonucleotide-RNA + a 5'-end dephospho-ribonucleoside-RNA + GTP + H2O = a ribonucleotidyl-ribonucleotide-RNA + GMP + diphosphate + H(+). Its function is as follows. Catalytic subunit of the tRNA-splicing ligase complex that acts by directly joining spliced tRNA halves to mature-sized tRNAs by incorporating the precursor-derived splice junction phosphate into the mature tRNA as a canonical 3',5'-phosphodiester. May act as an RNA ligase with broad substrate specificity, and may function toward other RNAs. This chain is RNA-splicing ligase RtcB homolog, found in Thalassiosira pseudonana (Marine diatom).